Here is a 970-residue protein sequence, read N- to C-terminus: Sodium/calcium exchanger 1 (970 aa).

The first 32 residues, 1–32, serve as a signal peptide directing secretion; sequence MLRLSLSPTYSLGFHLLAMMTLLISHVDHITA. At 33-71 the chain is on the extracellular side; sequence ETEMVEEGNETGECTGSYYCKKGVILPIWEPQDPSFGDK. Asparagine 41 carries an N-linked (GlcNAc...) asparagine glycan. A helical membrane pass occupies residues 72-92; it reads IARATVYFVAMVYMFLGVSII. At 93–133 the chain is on the cytoplasmic side; sequence ADRFMSSIEVITSQEKEITIKKPNGETTKTTVRIWNETVSN. A helical membrane pass occupies residues 134–154; the sequence is LTLMALGSSAPEILLSVIEVC. The Alpha-1 repeat unit spans residues 138 to 178; it reads ALGSSAPEILLSVIEVCGHNFTAGDLGPSTIVGSAAFNMFI. At 155 to 167 the chain is on the extracellular side; sequence GHNFTAGDLGPST. Residue asparagine 157 is glycosylated (N-linked (GlcNAc...) asparagine). A helical membrane pass occupies residues 168–188; the sequence is IVGSAAFNMFIIIALCVYVVP. At 189–201 the chain is on the cytoplasmic side; that stretch reads DGETRKIKHLRVF. The helical transmembrane segment at 202–222 threads the bilayer; it reads FVTAAWSIFAYTWLYIILSVI. Residues 223–228 lie on the Extracellular side of the membrane; that stretch reads SPGVVE. The chain crosses the membrane as a helical span at residues 229–249; the sequence is VWEGLLTFFFFPICVVFAWVA. The Cytoplasmic portion of the chain corresponds to 250–797; sequence DRRLLFYKYV…FVPPTEYWNG (548 aa). Positions 251 to 270 are putative calmodulin-binding region; that stretch reads RRLLFYKYVYKRYRAGKQRG. Serine 282 and serine 389 each carry phosphoserine. 2 consecutive Calx-beta domains span residues 393–493 and 524–624; these read VNTE…VHLS and ATVT…LEIG. Ca(2+) is bound by residues glutamate 417, aspartate 453, aspartate 478, aspartate 479, isoleucine 481, glutamate 483, glutamate 486, aspartate 530, aspartate 531, aspartate 532, glutamate 548, aspartate 584, aspartate 610, glutamate 611, glutamate 612, and glutamate 715. A helical transmembrane segment spans residues 798-818; the sequence is WACFIVSILMIGLLTAFIGDL. At 819-821 the chain is on the extracellular side; the sequence is ASH. Residues 822 to 842 form a helical membrane-spanning segment; the sequence is FGCTIGLKDSVTAVVFVALGT. One copy of the Alpha-2 repeat lies at 839–875; the sequence is ALGTSVPDTFASKVAATQDQYADASIGNVTGSNAVNV. The Cytoplasmic segment spans residues 843 to 871; it reads SVPDTFASKVAATQDQYADASIGNVTGSN. A helical transmembrane segment spans residues 872 to 892; sequence AVNVFLGIGVAWSIAAIYHAA. The Extracellular portion of the chain corresponds to 893-903; that stretch reads NGEQFKVSPGT. A helical transmembrane segment spans residues 904-924; that stretch reads LAFSVTLFTIFAFINVGVLLY. The Cytoplasmic segment spans residues 925–941; the sequence is RRRPEIGGELGGPRTAK. The helical transmembrane segment at 942 to 962 threads the bilayer; that stretch reads LLTSCLFVLLWLLYIFFSSLE. Topologically, residues 963–970 are extracellular; it reads AYCHIKGF.

This sequence belongs to the Ca(2+):cation antiporter (CaCA) (TC 2.A.19) family. SLC8 subfamily.

It localises to the cell membrane. The enzyme catalyses Ca(2+)(in) + 3 Na(+)(out) = Ca(2+)(out) + 3 Na(+)(in). Activated by micromolar levels of Ca(2+). Its function is as follows. Mediates the exchange of one Ca(2+) ion against three to four Na(+) ions across the cell membrane, and thereby contributes to the regulation of cytoplasmic Ca(2+) levels and Ca(2+)-dependent cellular processes. Contributes to Ca(2+) transport during excitation-contraction coupling in muscle. In a first phase, voltage-gated channels mediate the rapid increase of cytoplasmic Ca(2+) levels due to release of Ca(2+) stores from the endoplasmic reticulum. SLC8A1 mediates the export of Ca(2+) from the cell during the next phase, so that cytoplasmic Ca(2+) levels rapidly return to baseline. Required for normal embryonic heart development and the onset of heart contractions. The protein is Sodium/calcium exchanger 1 (SLC8A1) of Cavia porcellus (Guinea pig).